Reading from the N-terminus, the 128-residue chain is LIM domain-containing protein 2 (128 aa).

Met1 is modified (N-acetylmethionine). Residues 1–25 (MFQAAGAAQATPSHEAKGSSGSSTV) form a disordered region. The region spanning 39-99 (ETCAACQKTV…RPHFQQLFKS (61 aa)) is the LIM zinc-binding domain. The Zn(2+) site is built by Cys41, Cys44, His62, Cys65, Cys68, Cys71, Cys89, and His92.

Interacts with ILK.

Its subcellular location is the cytoplasm. It localises to the nucleus. Acts as an activator of the protein-kinase ILK, thereby regulating cell motility. The protein is LIM domain-containing protein 2 of Mus musculus (Mouse).